A 412-amino-acid polypeptide reads, in one-letter code: Inositol polyphosphate-5-phosphatase A (412 aa).

Residue cysteine 409 is the site of S-farnesyl cysteine attachment. A propeptide spans 410–412 (VVQ) (removed in mature form).

It belongs to the inositol 1,4,5-trisphosphate 5-phosphatase type I family. Interacts with TASOR. Isoprenylation at Cys-409 is required for localization at the membrane. Expressed at high levels in cerebellar Purkinje cells (at protein level). Expressed in Sertoli cells of the testis.

Its subcellular location is the cell membrane. It localises to the cell projection. It is found in the dendrite. It carries out the reaction 1D-myo-inositol 1,4,5-trisphosphate + H2O = 1D-myo-inositol 1,4-bisphosphate + phosphate. The catalysed reaction is 1D-myo-inositol 1,3,4,5-tetrakisphosphate + H2O = 1D-myo-inositol 1,3,4-trisphosphate + phosphate. Functionally, phosphatase that specifically hydrolyzes the 5-phosphate of inositol 1,4,5-trisphosphate to inositol 1,4-bisphosphate, and inositol 1,3,4,5-tetrasphosphate to inositol 1,3,4-trisphosphate. Plays a crucial role in the survival of cerebellar Purkinje cells. This Mus musculus (Mouse) protein is Inositol polyphosphate-5-phosphatase A (Inpp5a).